The primary structure comprises 182 residues: NAD(P)H-quinone oxidoreductase subunit J (182 aa).

This sequence belongs to the complex I 30 kDa subunit family. NDH-1 can be composed of about 15 different subunits; different subcomplexes with different compositions have been identified which probably have different functions.

Its subcellular location is the cellular thylakoid membrane. The enzyme catalyses a plastoquinone + NADH + (n+1) H(+)(in) = a plastoquinol + NAD(+) + n H(+)(out). It catalyses the reaction a plastoquinone + NADPH + (n+1) H(+)(in) = a plastoquinol + NADP(+) + n H(+)(out). Its function is as follows. NDH-1 shuttles electrons from an unknown electron donor, via FMN and iron-sulfur (Fe-S) centers, to quinones in the respiratory and/or the photosynthetic chain. The immediate electron acceptor for the enzyme in this species is believed to be plastoquinone. Couples the redox reaction to proton translocation, and thus conserves the redox energy in a proton gradient. Cyanobacterial NDH-1 also plays a role in inorganic carbon-concentration. The chain is NAD(P)H-quinone oxidoreductase subunit J from Synechococcus sp. (strain WH7803).